The primary structure comprises 177 residues: ATP synthase subunit delta (177 aa).

It belongs to the ATPase delta chain family. F-type ATPases have 2 components, F(1) - the catalytic core - and F(0) - the membrane proton channel. F(1) has five subunits: alpha(3), beta(3), gamma(1), delta(1), epsilon(1). F(0) has three main subunits: a(1), b(2) and c(10-14). The alpha and beta chains form an alternating ring which encloses part of the gamma chain. F(1) is attached to F(0) by a central stalk formed by the gamma and epsilon chains, while a peripheral stalk is formed by the delta and b chains.

The protein resides in the cell inner membrane. In terms of biological role, f(1)F(0) ATP synthase produces ATP from ADP in the presence of a proton or sodium gradient. F-type ATPases consist of two structural domains, F(1) containing the extramembraneous catalytic core and F(0) containing the membrane proton channel, linked together by a central stalk and a peripheral stalk. During catalysis, ATP synthesis in the catalytic domain of F(1) is coupled via a rotary mechanism of the central stalk subunits to proton translocation. Functionally, this protein is part of the stalk that links CF(0) to CF(1). It either transmits conformational changes from CF(0) to CF(1) or is implicated in proton conduction. The polypeptide is ATP synthase subunit delta (Aliivibrio fischeri (strain MJ11) (Vibrio fischeri)).